Here is a 515-residue protein sequence, read N- to C-terminus: Fatty acyl-CoA reductase 1 (515 aa).

Residues 1–465 are Cytoplasmic-facing; that stretch reads MVSIPEYYEG…ARKHLNKLRN (465 aa). A helical membrane pass occupies residues 466-483; it reads IRYGFNTILVILIWRIFI. Over 484–515 the chain is Peroxisomal; sequence ARSQMARNIWYFVVSLCYKFLSYFRASSTMRY.

This sequence belongs to the fatty acyl-CoA reductase family.

It is found in the peroxisome membrane. The enzyme catalyses a long-chain fatty acyl-CoA + 2 NADPH + 2 H(+) = a long-chain primary fatty alcohol + 2 NADP(+) + CoA. It carries out the reaction hexadecanoyl-CoA + 2 NADPH + 2 H(+) = hexadecan-1-ol + 2 NADP(+) + CoA. It catalyses the reaction octadecanoyl-CoA + 2 NADPH + 2 H(+) = octadecan-1-ol + 2 NADP(+) + CoA. The catalysed reaction is (9Z)-octadecenoyl-CoA + 2 NADPH + 2 H(+) = (9Z)-octadecen-1-ol + 2 NADP(+) + CoA. The enzyme catalyses (9Z,12Z)-octadecadienoyl-CoA + 2 NADPH + 2 H(+) = (9Z,12Z)-octadecadien-1-ol + 2 NADP(+) + CoA. It carries out the reaction eicosanoyl-CoA + 2 NADPH + 2 H(+) = eicosan-1-ol + 2 NADP(+) + CoA. It catalyses the reaction 16-methylheptadecanoyl-CoA + 2 NADPH + 2 H(+) = 16-methylheptadecan-1-ol + 2 NADP(+) + CoA. The catalysed reaction is 18-methylnonadecanoyl-CoA + 2 NADPH + 2 H(+) = 18-methylnonadecan-1-ol + 2 NADP(+) + CoA. Its function is as follows. Catalyzes the reduction of saturated and unsaturated C16 or C18 fatty acyl-CoA to fatty alcohols. It plays an essential role in the production of ether lipids/plasmalogens which synthesis requires fatty alcohols. In parallel, it is also required for wax monoesters production since fatty alcohols also constitute a substrate for their synthesis. This chain is Fatty acyl-CoA reductase 1, found in Gallus gallus (Chicken).